A 181-amino-acid chain; its full sequence is uncharacterized protein (181 aa).

The 159-residue stretch at 1-159 (MTVHHFTFHI…KACWMMQSLT (159 aa)) folds into the N-acetyltransferase domain.

It belongs to the acetyltransferase family.

This is an uncharacterized protein from Escherichia coli (strain K12).